The primary structure comprises 2173 residues: MEDTQAIDWDVEEEEETEQSSESLRCNVEPVGRLHIFSGAHGPEKDFPLHLGKNVVGRMPDCSVALPFPSISKQHAEIEILAWDKAPILRDCGSLNGTQILRPPKVLSPGVSHRLRDQELILFADLLCQYHRLDVSLPFVSRGPLTVEETPRVQGGTQPQRLLLAEDSEEEVDFLSERHVVKKSRTTSSPVAMIVPESDEEGHSPVLGGPGPPFAFNLNSDTDAEEGQQSATEEASSAARRGATIEAEQSEAEVVTEIQLEKDQPSVKERDNDTKVKRGAGNGVVPAGMILERSQPPGEDSDTDVDDDSRPPGRPAEVHLERAQPFGFIDSDTDAEEEGIPATPVVVPMKKRKIFHGVGTRGPGAPGLSHLQESQAGSDTDVEEGKAPQAVPLEKSQASMVINSDTDDEEEVSAALTLARLKESQPAVWNRDAEEDMAHHAVLLQRSQTTTGRDSDTDVEEEELPVENKQTVPKAHTKIRALVRAHSEKDQPPFGDSDDSVEADKSSPGIHLERSQASITVDINTQVEEEVPPGSAIVHMKKHQVSMEGTNQTDVKADGGPAKLLVVSLEEASPPHGDCEIDAEEGTSLAASAVADVRKSQLPAEGDAGAEWTAACLKQERAYEVGAQGGSPVAQVEQDLPTSRENLTDLVVDTDTPGESTQPQREGAQVPTGREREQHVGRTKDSEDNCDDSEDPDLQATQCFLENQGLEAVQSMEDEPTQAFMLTPPQELGSSHCSFQTTGTLDEPWEVLATQPFCLRESEDSETQPFDTHLEAYGPCLSPPRAIPGDQHPESPVHTEPMGIQGRGRQTVDKGMGIPKETAERVGPERGPLERETEKLLPERQTDVTGEEELTRGIQDREQKQLLARDTQRQESDKNGESASPERDRESLKVEIETSKEIQGKQVQKQTLPSKAFEREVERPVADRECEPAELEEKVPKVILERDAQRGEPKGGSQDQKGQASSPTSEPGVGAGDLPGPTSAPVPSGSQSGGRGSPVSPRRHQKGLLNCKMPPTEKASRIGAAEKASRGDQESPDACLPPTVPEASAPPQKPLNSQSQKHLAPQPLLSPLSPSIEPTIRKTGQDRSQEAPETPLSSELEPFHPKPKIITRKSSRMTPFPATSAAPEPHPSTSTAQPVTPKPTSQATRSRTNRSSVKTPEPVVPTVPELQPSTSTDQPVASEPTSQATRGRKNRSSVKTPEAVVPTALELHPSNSTDQPVTPKPTSEAIRSRTNRSSVKTPEAVVPTALELHPSNSTDQPVTPKPTSEAIRSRTNRSSVKTPEPVVPTVPELQPSTSTDQPVTSEPTSQATRGRTNRSSVKTPEPVVPTVPELQPSTSTDQPVASEPTSQATRGRKNRSSVKTPEAVVPTALELHPSNSTDQPVTPKPTSRTTRSRTNMSSVKTPESTVPIAPELPPSTSTEQPVITEPTYQPTRGRKNRSSVKTPETVVATAPKLQSSTSTDQPITPEPTSQATRGRTNRSSVKSPETVLRTAPELQPSTSTHQPVTAKHTSQATRGRTNRSSVKTPEPVVSTAPELQPSTSTHQPITPEPTSQATRGRTDRTSVKTPKIVVPTVPELQASTSTDQPVTSEPTSRTTRGRKNRSSVKTPETVVPTAPEPHPTTSTDQPITPKPTSRATRGRTNRSSVKTPELIVPIAPEFHPSTSRSQLVTPEPTSRATRGRKNRSSVKTPEPAVPTAPELHPTTSTDQPVTPKPTSRATRGRTNRSSVKTPEPVEPAASDLEPFTPTDQPVTPEAIPQGSQSKTLRSSTVSAMLIPTTPEFQSPVTTDQPISPEPIPQASCIKRQRATGNPGSLTAPIDHKPCSAPLEPKSRPSRNQRWGAVRADESLTAIPEPASPQLLDIPTHASQIQKVEPAGRSRFTPELQPKASQSRKRSLAIMDSPPHQKQPQRGEVSQKTVIIKEEEEDTAEKPGKEEDVMTPKPGKRKRDQAEEEPNRIPNRSLRRTKLNQESTAPKVLFTGVVDAQGERAVLALGGSLAGSAAEASHLVTDRIRRTVKFLCALGRGIPILSLDWLHQSRKAGCFLPPDEYVVTDPEQEKNFGFSLQDALSRARERRLLEGYEIYVTPGVQPPPPQMGEIISCCGGTYLPSMPRSYKPQRVVITCPQDFPRCSVPLRVGLPLLSPEFLLTGVLKQEAKPEAFVLSPLEMSST.

Residues 1-19 (MEDTQAIDWDVEEEEETEQ) show a composition bias toward acidic residues. A disordered region spans residues 1–22 (MEDTQAIDWDVEEEEETEQSSE). The interaction with CHEK2 stretch occupies residues 1 to 150 (MEDTQAIDWD…SRGPLTVEET (150 aa)). An interaction with the MRN complex region spans residues 2 to 222 (EDTQAIDWDV…PFAFNLNSDT (221 aa)). Threonine 4 carries the post-translational modification Phosphothreonine. The region spanning 54–105 (NVVGRMPDCSVALPFPSISKQHAEIEILAWDKAPILRDCGSLNGTQILRPPK) is the FHA domain. Position 108 is a phosphoserine (serine 108). Positions 145-570 (LTVEETPRVQ…PAKLLVVSLE (426 aa)) are required for nuclear localization (NLS1). A Phosphothreonine modification is found at threonine 146. Residues serine 168, serine 176, serine 198, and serine 220 each carry the phosphoserine modification. Positions 198–320 (SDEEGHSPVL…PPGRPAEVHL (123 aa)) are disordered. Threonine 222 is subject to Phosphothreonine. Low complexity predominate over residues 227–244 (GQQSATEEASSAARRGAT). Basic and acidic residues predominate over residues 259-276 (QLEKDQPSVKERDNDTKV). The residue at position 301 (serine 301) is a Phosphoserine. A Phosphothreonine modification is found at threonine 303. Positions 308 to 320 (DSRPPGRPAEVHL) are enriched in basic and acidic residues. A Phosphoserine modification is found at serine 331. Residue threonine 333 is modified to Phosphothreonine. Residues 359-383 (GTRGPGAPGLSHLQESQAGSDTDVE) form a disordered region. A phosphoserine mark is found at serine 374 and serine 378. Threonine 380 is subject to Phosphothreonine. Residues serine 396, serine 399, and serine 404 each carry the phosphoserine modification. Threonine 406 carries the post-translational modification Phosphothreonine. At serine 413 the chain carries Phosphoserine. The tract at residues 444-515 (LQRSQTTTGR…SSPGIHLERS (72 aa)) is disordered. Residue threonine 451 is modified to Phosphothreonine. Serine 455 is modified (phosphoserine). The residue at position 457 (threonine 457) is a Phosphothreonine. Phosphoserine is present on residues serine 487, serine 497, serine 500, serine 506, serine 507, and serine 515. Threonine 525 is modified (phosphothreonine). Serine 592 carries the phosphoserine modification. Lysine 618 participates in a covalent cross-link: Glycyl lysine isopeptide (Lys-Gly) (interchain with G-Cter in SUMO1); alternate. Lysine 618 is covalently cross-linked (Glycyl lysine isopeptide (Lys-Gly) (interchain with G-Cter in SUMO2); alternate). At serine 631 the chain carries Phosphoserine. Disordered stretches follow at residues 652 to 697 (VDTD…EDPD) and 773 to 1770 (HLEA…TLRS). Residues 673–687 (GREREQHVGRTKDSE) show a composition bias toward basic and acidic residues. A compositionally biased stretch (acidic residues) spans 688-697 (DNCDDSEDPD). 2 positions are modified to phosphoserine: serine 782 and serine 795. The residue at position 814 (lysine 814) is an N6-acetyllysine. Basic and acidic residues-rich tracts occupy residues 821–846 (ETAERVGPERGPLERETEKLLPERQT), 853–864 (ELTRGIQDREQK), 870–903 (DTQRQESDKNGESASPERDRESLKVEIETSKEIQ), and 916–953 (AFEREVERPVADRECEPAELEEKVPKVILERDAQRGEP). Phosphoserine is present on residues serine 957, serine 1000, serine 1035, serine 1070, and serine 1088. Residues 957 to 969 (SQDQKGQASSPTS) are compositionally biased toward polar residues. Residues 1079 to 1090 (TIRKTGQDRSQE) show a composition bias toward basic and acidic residues. A compositionally biased stretch (basic residues) spans 1105–1115 (PKPKIITRKSS). Residues 1131 to 1156 (PSTSTAQPVTPKPTSQATRSRTNRSS) show a composition bias toward polar residues. Positions 1150–1694 (SRTNRSSVKT…KNRSSVKTPE (545 aa)) are interaction with the PRKDC complex. The segment covering 1157–1169 (VKTPEPVVPTVPE) has biased composition (low complexity). Threonine 1159 carries the phosphothreonine modification. Over residues 1171-1189 (QPSTSTDQPVASEPTSQAT) the composition is skewed to polar residues. Position 1200 is a phosphothreonine (threonine 1200). Phosphoserine is present on serine 1237. Phosphothreonine occurs at positions 1241, 1282, and 1304. Over residues 1280–1292 (VKTPEPVVPTVPE) the composition is skewed to low complexity. Residues 1294-1320 (QPSTSTDQPVTSEPTSQATRGRTNRSS) are compositionally biased toward polar residues. Low complexity predominate over residues 1321-1333 (VKTPEPVVPTVPE). Positions 1335-1353 (QPSTSTDQPVASEPTSQAT) are enriched in polar residues. The span at 1390–1402 (TSRTTRSRTNMSS) shows a compositional bias: low complexity. Composition is skewed to polar residues over residues 1418-1434 (PSTSTEQPVITEPTYQP), 1456-1487 (KLQSSTSTDQPITPEPTSQATRGRTNRSSVKS), 1499-1527 (QPSTSTHQPVTAKHTSQATRGRTNRSSVK), and 1540-1559 (QPSTSTHQPITPEPTSQATR). 2 positions are modified to phosphoserine: serine 1483 and serine 1484. Position 1486 is an N6-acetyllysine (lysine 1486). Residues threonine 1509 and threonine 1550 each carry the phosphothreonine modification. The segment covering 1567–1578 (VKTPKIVVPTVP) has biased composition (low complexity). The span at 1581-1598 (QASTSTDQPVTSEPTSRT) shows a compositional bias: polar residues. Threonine 1617 and threonine 1632 each carry phosphothreonine. The segment covering 1626-1639 (STDQPITPKPTSRA) has biased composition (polar residues). Serine 1648 is subject to Phosphoserine. Phosphothreonine occurs at positions 1651 and 1673. Residues 1664–1680 (PSTSRSQLVTPEPTSRA) show a composition bias toward polar residues. Serine 1688 carries the post-translational modification Phosphoserine. Threonine 1692, threonine 1714, threonine 1748, and threonine 1755 each carry phosphothreonine. Positions 1705–1721 (PTTSTDQPVTPKPTSRA) are enriched in polar residues. Polar residues predominate over residues 1761–1770 (QGSQSKTLRS). Serine 1765 carries the post-translational modification Phosphoserine. Threonine 1781 carries the post-translational modification Phosphothreonine. The segment at 1782 to 2173 (PEFQSPVTTD…VLSPLEMSST (392 aa)) is required for nuclear localization (NLS2). Phosphoserine occurs at positions 1786 and 1795. The tract at residues 1809 to 1971 (RATGNPGSLT…NRSLRRTKLN (163 aa)) is disordered. A Glycyl lysine isopeptide (Lys-Gly) (interchain with G-Cter in SUMO2) cross-link involves residue lysine 1824. Serine 1859 carries the post-translational modification Phosphoserine. A Glycyl lysine isopeptide (Lys-Gly) (interchain with G-Cter in SUMO2) cross-link involves residue lysine 1874. At threonine 1884 the chain carries Phosphothreonine. Serine 1904 bears the Phosphoserine mark. Residues 1907 to 1920 (HQKQPQRGEVSQKT) are compositionally biased toward polar residues. Residue lysine 1924 forms a Glycyl lysine isopeptide (Lys-Gly) (interchain with G-Cter in SUMO1); alternate linkage. Lysine 1924 is covalently cross-linked (Glycyl lysine isopeptide (Lys-Gly) (interchain with G-Cter in SUMO2); alternate). Over residues 1931 to 1941 (AEKPGKEEDVM) the composition is skewed to basic and acidic residues. Threonine 1942 bears the Phosphothreonine mark. BRCT domains lie at 1976–2054 (APKV…EYVV) and 2075–2166 (RERR…FVLS). At arginine 2027 the chain carries Omega-N-methylarginine.

As to quaternary structure, homodimer. Interacts with H2AX, which requires phosphorylation of H2AX on 'Ser-139'. Interacts with the MRN complex, composed of MRE11, RAD50, and NBN. Interacts with CHEK2, which requires ATM-mediated phosphorylation of 'Thr-68' within the FHA domain of CHEK2. Interacts constitutively with the BRCA1-BARD1 complex, SMC1A and TP53BP1. Interacts with ATM and FANCD2, and these interactions are reduced upon DNA damage. Also interacts with the PRKDC complex, composed of XRCC6/KU70, XRCC5/KU80 and PRKDC/XRCC7. This interaction may be required for PRKDC autophosphorylation, which is essential for DNA double strand break (DSB) repair. When phosphorylated by ATM, interacts with RNF8 (via FHA domain). Interacts with CEP164. When phosphorylated, interacts with APTX (via FHA-like domain). Interacts (when phosphorylated) with TOPBP1; promoting TOPBP1 localization to DNA damage sites during mitosis. Interacts (when phosphorylated) with NBN; promoting NBN and MRN complex localization to DNA damage sites. Post-translationally, phosphorylated upon exposure to ionizing radiation (IR), ultraviolet radiation (UV), and hydroxyurea (HU). Phosphorylation in response to IR requires ATM, NBN, and possibly CHEK2. Also phosphorylated during the G2/M phase of the cell cycle and during activation of the mitotic spindle checkpoint. Phosphorylation at Thr-4 by ATM stabilizes and enhances homodimerization via the FHA domain. Phosphorylated at Ser-168 and Ser-198 by CK2 in response to DNA damage during mitosis, promoting interaction with TOPBP1. Phosphorylated by CK2 in response to DNA damage, promoting interaction with NBN and recruitment of the MRN complex to DNA damage sites. In terms of processing, sumoylation at Lys-1924 by PIAS4 following DNA damage promotes ubiquitin-mediated degradation. Ubiquitinated by RNF4, leading to proteasomal degradation; undergoes 'Lys-48'-linked polyubiquitination.

The protein localises to the nucleus. The protein resides in the chromosome. In terms of biological role, histone reader protein required for checkpoint-mediated cell cycle arrest in response to DNA damage within both the S phase and G2/M phases of the cell cycle. Specifically recognizes and binds histone H2AX phosphorylated at 'Ser-139', a marker of DNA damage, serving as a scaffold for the recruitment of DNA repair and signal transduction proteins to discrete foci of DNA damage sites. Also required for downstream events subsequent to the recruitment of these proteins. These include phosphorylation and activation of the ATM, CHEK1 and CHEK2 kinases, and stabilization of TP53/p53 and apoptosis. ATM and CHEK2 may also be activated independently by a parallel pathway mediated by TP53BP1. Required for chromosomal stability during mitosis by promoting recruitment of TOPBP1 to DNA double strand breaks (DSBs): TOPBP1 forms filamentous assemblies that bridge MDC1 and tether broken chromosomes during mitosis. Required for the repair of DSBs via homologous recombination by promoting recruitment of NBN component of the MRN complex to DSBs. The chain is Mediator of DNA damage checkpoint protein 1 (MDC1) from Macaca mulatta (Rhesus macaque).